The primary structure comprises 386 residues: Protein phosphatase methylesterase 1 (386 aa).

A disordered region spans residues isoleucine 20–asparagine 48. Residues serine 194, aspartate 222, and histidine 348 contribute to the active site.

It belongs to the AB hydrolase superfamily.

It catalyses the reaction [phosphatase 2A protein]-C-terminal L-leucine methyl ester + H2O = [phosphatase 2A protein]-C-terminal L-leucine + methanol + H(+). Demethylates proteins that have been reversibly carboxymethylated. Demethylates the phosphatase PP2A catalytic subunit. This chain is Protein phosphatase methylesterase 1 (PPE1), found in Candida glabrata (strain ATCC 2001 / BCRC 20586 / JCM 3761 / NBRC 0622 / NRRL Y-65 / CBS 138) (Yeast).